The primary structure comprises 234 residues: Sugar fermentation stimulation protein A (234 aa).

The segment at residues 201-220 (LLSEAQNKGVEVLAYKAELS) is a DNA-binding region (H-T-H motif).

It belongs to the SfsA family.

Functionally, binds to DNA non-specifically. Could be a regulatory factor involved in maltose metabolism. This is Sugar fermentation stimulation protein A from Salmonella agona (strain SL483).